Here is a 444-residue protein sequence, read N- to C-terminus: Ribosomal protein uS12 methylthiotransferase RimO (444 aa).

Positions 4–120 constitute an MTTase N-terminal domain; sequence KSAALVSLGC…LKSFIRDHEA (117 aa). [4Fe-4S] cluster contacts are provided by cysteine 13, cysteine 49, cysteine 83, cysteine 157, cysteine 161, and cysteine 164. One can recognise a Radical SAM core domain in the interval 143-371; the sequence is VEGRSSAYVK…LELQRGISRR (229 aa). In terms of domain architecture, TRAM spans 374–442; that stretch reads ESLVGRVLPV…DYDVEAELLS (69 aa).

This sequence belongs to the methylthiotransferase family. RimO subfamily. [4Fe-4S] cluster serves as cofactor.

The protein resides in the cytoplasm. It catalyses the reaction L-aspartate(89)-[ribosomal protein uS12]-hydrogen + (sulfur carrier)-SH + AH2 + 2 S-adenosyl-L-methionine = 3-methylsulfanyl-L-aspartate(89)-[ribosomal protein uS12]-hydrogen + (sulfur carrier)-H + 5'-deoxyadenosine + L-methionine + A + S-adenosyl-L-homocysteine + 2 H(+). In terms of biological role, catalyzes the methylthiolation of an aspartic acid residue of ribosomal protein uS12. In Syntrophobacter fumaroxidans (strain DSM 10017 / MPOB), this protein is Ribosomal protein uS12 methylthiotransferase RimO.